Reading from the N-terminus, the 321-residue chain is Nitrilase blr3397 (321 aa).

Residues 10-277 (YKAAVVQAAS…ETILYADIAL (268 aa)) form the CN hydrolase domain. The Proton acceptor role is filled by glutamate 50. The active-site Proton donor is lysine 137. The Nucleophile role is filled by cysteine 171.

This sequence belongs to the carbon-nitrogen hydrolase superfamily. Nitrilase family. In terms of assembly, homodecamer.

The enzyme catalyses an aliphatic nitrile + 2 H2O = a carboxylate + NH4(+). Nitrilase that acts on various kinds of nitrile compounds such as aliphatic and aromatic nitriles. Has higher activity toward aliphatic nitriles compared to aromatic nitriles. Among the different substrates tested, has the highest activity toward hydrocinnamonitrile. This is Nitrilase blr3397 from Bradyrhizobium diazoefficiens (strain JCM 10833 / BCRC 13528 / IAM 13628 / NBRC 14792 / USDA 110).